Reading from the N-terminus, the 287-residue chain is ATP synthase gamma chain (287 aa).

This sequence belongs to the ATPase gamma chain family. In terms of assembly, F-type ATPases have 2 components, CF(1) - the catalytic core - and CF(0) - the membrane proton channel. CF(1) has five subunits: alpha(3), beta(3), gamma(1), delta(1), epsilon(1). CF(0) has three main subunits: a, b and c.

Its subcellular location is the cell inner membrane. Produces ATP from ADP in the presence of a proton gradient across the membrane. The gamma chain is believed to be important in regulating ATPase activity and the flow of protons through the CF(0) complex. The chain is ATP synthase gamma chain from Salmonella gallinarum (strain 287/91 / NCTC 13346).